The primary structure comprises 718 residues: Acetolactate synthase, mitochondrial (718 aa).

Disordered stretches follow at residues 1–50 (MLTR…APVY) and 72–101 (RKIQ…APQP). Residues 32–45 (RYSNNIHTSSTQNA) are compositionally biased toward polar residues. Positions 76-99 (SSASTAAASPAVRPQPAQHFQAAP) are enriched in low complexity. Glu173 contacts thiamine diphosphate. Arg275 is an FAD binding site. Positions 296-327 (IPAKSAQPGHSPYLPSNPLNPSSQPSDPLPGD) are disordered. A compositionally biased stretch (low complexity) spans 306–325 (SPYLPSNPLNPSSQPSDPLP). FAD contacts are provided by residues 397–418 (HGSA…LGVR) and 449–468 (EIQP…VLGD). Positions 541 to 621 (QHQMWACQYY…VKVLLFNNEF (81 aa)) are thiamine pyrophosphate binding. Mg(2+) contacts are provided by Asp592 and Asn619.

Belongs to the TPP enzyme family. Requires Mg(2+) as cofactor. The cofactor is thiamine diphosphate.

Its subcellular location is the mitochondrion. It carries out the reaction 2 pyruvate + H(+) = (2S)-2-acetolactate + CO2. It functions in the pathway amino-acid biosynthesis; L-isoleucine biosynthesis; L-isoleucine from 2-oxobutanoate: step 1/4. The protein operates within amino-acid biosynthesis; L-valine biosynthesis; L-valine from pyruvate: step 1/4. The protein is Acetolactate synthase, mitochondrial (ILV2) of Cryptococcus neoformans var. neoformans serotype D (strain JEC21 / ATCC MYA-565) (Filobasidiella neoformans).